Reading from the N-terminus, the 697-residue chain is Protein no-on-transient A (697 aa).

Over residues 1–29 the composition is skewed to polar residues; that stretch reads MENSVKMDNSGNSTPLPQRQRRANNQPNK. A disordered region spans residues 1 to 253; the sequence is MENSVKMDNS…GGNNSQRGDD (253 aa). Gly residues predominate over residues 61–80; the sequence is NGGGGSVVGGGGGGGGGGGQ. Composition is skewed to low complexity over residues 102–118 and 139–191; these read RGGN…NQNQ and ANNA…QNQA. Gly residues predominate over residues 195 to 223; that stretch reads RGGGGGGGGGGGGGGGGGGGGGGGGGGGG. Basic and acidic residues predominate over residues 224–233; the sequence is GRDRNPDRRG. The segment covering 234-246 has biased composition (gly residues); it reads GGGGGGQNSGGGN. 2 RRM domains span residues 285–357 and 359–445; these read NRLY…FAPN and TILR…DDND. Residues 488–586 adopt a coiled-coil conformation; it reads DLFKSKQDAL…DMRRRQQENT (99 aa). Positions 551-565 are enriched in basic and acidic residues; sequence EMRKREEETMRRHQT. Disordered regions lie at residues 551–575 and 601–697; these read EMRK…VRQE and QEGF…RRRF. Residues 603–622 are compositionally biased toward gly residues; that stretch reads GFGGGNGGGGGGGGGGGGVG. 2 stretches are compositionally biased toward low complexity: residues 623–635 and 642–659; these read NSNF…NSNS and GNNN…GANN.

Its function is as follows. Required for normal vision and courtship behavior in Drosophila. This chain is Protein no-on-transient A (nonA), found in Drosophila virilis (Fruit fly).